Reading from the N-terminus, the 863-residue chain is Chloride channel protein A (863 aa).

Over 1–124 (MFRNNNNDNN…TSKLNHMLKT (124 aa)) the chain is Cytoplasmic. The disordered stretch occupies residues 48–78 (ENGLINNNNNSHNNNNGGNNNNHGPSKVTHR). Low complexity predominate over residues 49-71 (NGLINNNNNSHNNNNGGNNNNHG). 7 helical membrane-spanning segments follow: residues 125–145 (FGKW…AYLV), 171–191 (IAFL…SLVI), 228–248 (LVSL…GPMI), 289–309 (GAAA…LFGF), 324–344 (TFFA…GFDM), 367–387 (LIPF…FVNL), and 408–428 (VLEV…CAAF). A disordered region spans residues 434–460 (KTQANGSQTNSLDTSSSSILSSSGDNS). Residues 439–460 (GSQTNSLDTSSSSILSSSGDNS) show a composition bias toward low complexity. The next 3 helical transmembrane spans lie at 518–538 (IFTI…TTIT), 539–559 (SGLM…ATFG), and 561–581 (LVGQ…ALVG). 2 CBS domains span residues 661-742 (MKTE…CHEQ) and 816-863 (MNLS…KDLL).

It belongs to the chloride channel (TC 2.A.49) family.

The protein localises to the membrane. Voltage-gated chloride channel. Chloride channels may have several functions including the regulation of cell volume, membrane potential stabilization and signal transduction. The polypeptide is Chloride channel protein A (clcA) (Dictyostelium discoideum (Social amoeba)).